We begin with the raw amino-acid sequence, 644 residues long: Threonine--tRNA ligase (644 aa).

The region spanning 8 to 70 (VKAMVITLRD…EEDGELEILT (63 aa)) is the TGS domain. The segment at 251–541 (DHRKLGKELD…LTEHFAGAFP (291 aa)) is catalytic. 3 residues coordinate Zn(2+): Cys342, His393, and His518.

Belongs to the class-II aminoacyl-tRNA synthetase family. Homodimer. It depends on Zn(2+) as a cofactor.

It localises to the cytoplasm. The enzyme catalyses tRNA(Thr) + L-threonine + ATP = L-threonyl-tRNA(Thr) + AMP + diphosphate + H(+). In terms of biological role, catalyzes the attachment of threonine to tRNA(Thr) in a two-step reaction: L-threonine is first activated by ATP to form Thr-AMP and then transferred to the acceptor end of tRNA(Thr). Also edits incorrectly charged L-seryl-tRNA(Thr). This is Threonine--tRNA ligase from Caldanaerobacter subterraneus subsp. tengcongensis (strain DSM 15242 / JCM 11007 / NBRC 100824 / MB4) (Thermoanaerobacter tengcongensis).